The sequence spans 215 residues: Large ribosomal subunit protein uL3 (215 aa).

Positions 136 to 155 (GVSISHRSHGSTGQRQDPGK) are disordered. The residue at position 151 (Gln-151) is an N5-methylglutamine.

The protein belongs to the universal ribosomal protein uL3 family. In terms of assembly, part of the 50S ribosomal subunit. Forms a cluster with proteins L14 and L19. Post-translationally, methylated by PrmB.

In terms of biological role, one of the primary rRNA binding proteins, it binds directly near the 3'-end of the 23S rRNA, where it nucleates assembly of the 50S subunit. The sequence is that of Large ribosomal subunit protein uL3 from Rickettsia felis (strain ATCC VR-1525 / URRWXCal2) (Rickettsia azadi).